We begin with the raw amino-acid sequence, 314 residues long: DNA-directed RNA polymerase subunit alpha (314 aa).

The interval 1–228 is alpha N-terminal domain (alpha-NTD); sequence MIEIEKPKIE…EHLNIFVGLT (228 aa). The interval 245–314 is alpha C-terminal domain (alpha-CTD); sequence KEKVMEMTIE…DLGLGLRDDD (70 aa).

The protein belongs to the RNA polymerase alpha chain family. In terms of assembly, homodimer. The RNAP catalytic core consists of 2 alpha, 1 beta, 1 beta' and 1 omega subunit. When a sigma factor is associated with the core the holoenzyme is formed, which can initiate transcription.

The catalysed reaction is RNA(n) + a ribonucleoside 5'-triphosphate = RNA(n+1) + diphosphate. DNA-dependent RNA polymerase catalyzes the transcription of DNA into RNA using the four ribonucleoside triphosphates as substrates. This chain is DNA-directed RNA polymerase subunit alpha, found in Oceanobacillus iheyensis (strain DSM 14371 / CIP 107618 / JCM 11309 / KCTC 3954 / HTE831).